Reading from the N-terminus, the 310-residue chain is Malate dehydrogenase (310 aa).

NAD(+) is bound by residues 7-13 (GAAGGIG) and aspartate 34. Substrate-binding residues include arginine 81 and arginine 87. NAD(+) is bound by residues asparagine 94 and 117–119 (ITN). Substrate-binding residues include asparagine 119 and arginine 153. The active-site Proton acceptor is the histidine 177. Residue methionine 227 coordinates NAD(+).

Belongs to the LDH/MDH superfamily. MDH type 1 family. Homodimer.

The catalysed reaction is (S)-malate + NAD(+) = oxaloacetate + NADH + H(+). Catalyzes the reversible oxidation of malate to oxaloacetate. The chain is Malate dehydrogenase from Vibrio vulnificus (strain YJ016).